The following is a 242-amino-acid chain: 1-(5-phosphoribosyl)-5-[(5-phosphoribosylamino)methylideneamino] imidazole-4-carboxamide isomerase (242 aa).

Residue Asp-7 is the Proton acceptor of the active site. Residue Asp-129 is the Proton donor of the active site.

Belongs to the HisA/HisF family.

Its subcellular location is the cytoplasm. The enzyme catalyses 1-(5-phospho-beta-D-ribosyl)-5-[(5-phospho-beta-D-ribosylamino)methylideneamino]imidazole-4-carboxamide = 5-[(5-phospho-1-deoxy-D-ribulos-1-ylimino)methylamino]-1-(5-phospho-beta-D-ribosyl)imidazole-4-carboxamide. It functions in the pathway amino-acid biosynthesis; L-histidine biosynthesis; L-histidine from 5-phospho-alpha-D-ribose 1-diphosphate: step 4/9. In Pseudoalteromonas translucida (strain TAC 125), this protein is 1-(5-phosphoribosyl)-5-[(5-phosphoribosylamino)methylideneamino] imidazole-4-carboxamide isomerase.